Here is a 186-residue protein sequence, read N- to C-terminus: Ribosome-recycling factor (186 aa).

It belongs to the RRF family.

It is found in the cytoplasm. In terms of biological role, responsible for the release of ribosomes from messenger RNA at the termination of protein biosynthesis. May increase the efficiency of translation by recycling ribosomes from one round of translation to another. In Cupriavidus taiwanensis (strain DSM 17343 / BCRC 17206 / CCUG 44338 / CIP 107171 / LMG 19424 / R1) (Ralstonia taiwanensis (strain LMG 19424)), this protein is Ribosome-recycling factor.